A 113-amino-acid polypeptide reads, in one-letter code: Protein translation factor SUI1 homolog 1 (113 aa).

Residues Met1–Gly24 form a disordered region. An N-acetylserine modification is found at Ser2.

It belongs to the SUI1 family.

Functionally, probably involved in translation. The protein is Protein translation factor SUI1 homolog 1 of Arabidopsis thaliana (Mouse-ear cress).